The following is a 66-amino-acid chain: Small ribosomal subunit protein bS21 (66 aa).

The protein belongs to the bacterial ribosomal protein bS21 family.

The sequence is that of Small ribosomal subunit protein bS21 from Maridesulfovibrio salexigens (strain ATCC 14822 / DSM 2638 / NCIMB 8403 / VKM B-1763) (Desulfovibrio salexigens).